The following is a 362-amino-acid chain: Putative F-box protein At3g25750 (362 aa).

An F-box domain is found at 4 to 52 (TEWSDLPEELLDLIANRYSSNIDVLRIRSTCKSWRSAVAMSKERLQFRF).

This chain is Putative F-box protein At3g25750, found in Arabidopsis thaliana (Mouse-ear cress).